The primary structure comprises 113 residues: Carboxysome shell protein CcmK4 (113 aa).

Residues Ala5 to Pro91 enclose the BMC domain.

It belongs to the bacterial microcompartments protein family. CcmK subfamily. In terms of assembly, homohexamer. Interacts stably with CcmK3, probably forms heterohexamers with a 1:2 CcmK3:CcmK4 stoichiometry.

Its subcellular location is the carboxysome. Functionally, one of the shell proteins of the carboxysome, a polyhedral inclusion where RuBisCO (ribulose bisphosphate carboxylase, rbcL-rbcS) is sequestered. Assembles into hexamers which make sheets that form the facets of the polyhedral carboxysome. The hexamer central pore probably regulates metabolite flux. Its function is as follows. A minor shell protein of the carboxysome, a polyhedral inclusion where RuBisCO (ribulose bisphosphate carboxylase, rbcL-rbcS) is sequestered. Hexamers form sheets that form the facets of the polyhedral carboxysome. The shell is 4.5 nm thick, as observed for CcmK proteins. In PCC 7942 there are several CcmK paralogs with presumably functional differences; replacing the central pore residues (34-37) with those of CcmK2 from this organism (Tyr-Glu-Lys-Ile) allows the bacterium to make carboxysomes, but the expression level is too low to know if the carboxysome is functional for CO(2) fixation. This subunit probably makes both homohexamers and heterohexamers with CcmK3. The CcmK3-CcmK4 heterohexmers have been suggested to cap other hexamers, perhaps to alter metabolite flux. The sequence is that of Carboxysome shell protein CcmK4 from Synechococcus elongatus (strain ATCC 33912 / PCC 7942 / FACHB-805) (Anacystis nidulans R2).